A 299-amino-acid polypeptide reads, in one-letter code: Non-homologous end joining protein Ku (299 aa).

Positions 10–188 (ISFGLVHIPV…TEAVTDARLT (179 aa)) constitute a Ku domain. Disordered regions lie at residues 227–249 (AGEG…SADV) and 261–299 (AGKS…GKAS). Residues 273–283 (AAKDKVADKQS) show a composition bias toward basic and acidic residues. Positions 284 to 299 (PKPKRPAVRKKTGKAS) are enriched in basic residues.

Belongs to the prokaryotic Ku family. Homodimer. Interacts with LigD.

With LigD forms a non-homologous end joining (NHEJ) DNA repair enzyme, which repairs dsDNA breaks with reduced fidelity. Binds linear dsDNA with 5'- and 3'- overhangs but not closed circular dsDNA nor ssDNA. Recruits and stimulates the ligase activity of LigD. The chain is Non-homologous end joining protein Ku from Pseudomonas syringae pv. tomato (strain ATCC BAA-871 / DC3000).